Reading from the N-terminus, the 537-residue chain is MAFNFNWSPLTADAGFYKRARDLLTTALNKSPKPPIIVDDIIVTEFNLGSVPPDLEILEIGDLAEDRFRGIFKMCYSGDAFLTLKTRVQANPLNTCLSAKPDFTSPQPLAAASSLTIPLQITLSEFKLSAFIILVFSKQKGLTIVFRNDPLESLKVSSTFDSIQFVRDYLQRTIEGKLRDLFMDELPAIIHRLSLQLWCPDQIAKEDEEPKEADEHGVNPLATPPLDAVDLHGHLLDPAAISELSLDGGPEAQLLFSQKTLLRLSDITNSQVTSSLDTSETKDVLFRAWAGPDKVDLTNTTPLATPSLARSYSYTSPHTYTFSDNGSQDQGSLPSRPSLVHLNSATAGLSLGSGRHSKAGRKKKTRVVNLRRKAETEANSEEEEDTPETDSIEPPMSEPIMPHPILEESDEELASNKVHFGRSPDLQQQPRRPSFRAQATNAPEVPVPSVELGKTAVPPLQSSEKQAARFPSQDPAFVDSKTGRPRPRSDTSSVILEQAWIMKMAGEIARRVYDEKNGNPTFWDDQDDTPPPAYEAR.

The 195-residue stretch at 1 to 195 (MAFNFNWSPL…LPAIIHRLSL (195 aa)) folds into the SMP-LTD domain. Disordered regions lie at residues 320–339 (YTFSDNGSQDQGSLPSRPSL), 348–403 (GLSL…IMPH), 421–493 (GRSP…DTSS), and 516–537 (KNGNPTFWDDQDDTPPPAYEAR). A compositionally biased stretch (basic residues) spans 355-371 (RHSKAGRKKKTRVVNLR). Residues 378 to 391 (ANSEEEEDTPETDS) show a composition bias toward acidic residues. The span at 425–441 (DLQQQPRRPSFRAQATN) shows a compositional bias: polar residues.

The protein belongs to the MDM34 family. As to quaternary structure, component of the ER-mitochondria encounter structure (ERMES) or MDM complex, composed of MMM1, MDM10, MDM12 and MDM34.

Its subcellular location is the mitochondrion outer membrane. Functionally, component of the ERMES/MDM complex, which serves as a molecular tether to connect the endoplasmic reticulum (ER) and mitochondria. Components of this complex are involved in the control of mitochondrial shape and protein biogenesis, and function in nonvesicular lipid trafficking between the ER and mitochondria. MDM34 is required for the interaction of the ER-resident membrane protein MMM1 and the outer mitochondrial membrane-resident beta-barrel protein MDM10. The sequence is that of Mitochondrial distribution and morphology protein 34 from Chaetomium globosum (strain ATCC 6205 / CBS 148.51 / DSM 1962 / NBRC 6347 / NRRL 1970) (Soil fungus).